A 168-amino-acid chain; its full sequence is Thiosulfate dehydrogenase [quinone] small subunit (168 aa).

A helical transmembrane segment spans residues 6-26 (IIGIIFAILVVGWILATGQWA).

In terms of assembly, heterodimer of a large and a small subunit in a 2:2 stoichiometry. TQO may associate with the terminal oxidase formed by doxBCE. The N-terminus is blocked. In terms of processing, glycosylated.

It localises to the cell membrane. The enzyme catalyses 6-decylubiquinone + 2 thiosulfate = 6-decylubiquinol + tetrathionate. Inhibited by sulfite, metabisulfite and dithonite. Its function is as follows. TQO plays a role in sulfur oxidation and is proposed to couple sulfur oxidation to dioxygen reduction; caldariellaquinone or sulfolobus quinone seem to serve to transfer electrons to the electron transport chain terminal oxidase formed by DoxBCE. This is Thiosulfate dehydrogenase [quinone] small subunit (doxA) from Acidianus ambivalens (Desulfurolobus ambivalens).